The primary structure comprises 334 residues: D-fructose 1,6-bisphosphatase class 2/sedoheptulose 1,7-bisphosphatase (334 aa).

Aspartate 33, glutamate 57, aspartate 85, and glutamate 88 together coordinate Mn(2+). Residues 88–90, tyrosine 119, 164–166, and 186–188 contribute to the substrate site; these read EGT, RAR, and DGD. Residue glutamate 213 coordinates Mn(2+).

Belongs to the FBPase class 2 family. As to quaternary structure, homotetramer. Mn(2+) is required as a cofactor.

It carries out the reaction beta-D-fructose 1,6-bisphosphate + H2O = beta-D-fructose 6-phosphate + phosphate. The catalysed reaction is D-sedoheptulose 1,7-bisphosphate + H2O = D-sedoheptulose 7-phosphate + phosphate. It participates in carbohydrate biosynthesis; Calvin cycle. Its function is as follows. Catalyzes the hydrolysis of fructose 1,6-bisphosphate (Fru 1,6-P2) and sedoheptulose 1,7-bisphosphate (Sed 1,7-P2) to fructose 6-phosphate and sedoheptulose 7-phosphate, respectively. This is D-fructose 1,6-bisphosphatase class 2/sedoheptulose 1,7-bisphosphatase from Synechococcus sp. (strain CC9605).